Consider the following 168-residue polypeptide: 2-C-methyl-D-erythritol 2,4-cyclodiphosphate synthase (168 aa).

Residues D15 and H17 each coordinate a divalent metal cation. Residues 15–17 (DVH) and 45–46 (HS) contribute to the 4-CDP-2-C-methyl-D-erythritol 2-phosphate site. H53 is a binding site for a divalent metal cation. Residues 72–76 (FPNSD), F150, and R153 contribute to the 4-CDP-2-C-methyl-D-erythritol 2-phosphate site.

This sequence belongs to the IspF family. Homotrimer. Requires a divalent metal cation as cofactor.

It catalyses the reaction 4-CDP-2-C-methyl-D-erythritol 2-phosphate = 2-C-methyl-D-erythritol 2,4-cyclic diphosphate + CMP. It participates in isoprenoid biosynthesis; isopentenyl diphosphate biosynthesis via DXP pathway; isopentenyl diphosphate from 1-deoxy-D-xylulose 5-phosphate: step 4/6. Involved in the biosynthesis of isopentenyl diphosphate (IPP) and dimethylallyl diphosphate (DMAPP), two major building blocks of isoprenoid compounds. Catalyzes the conversion of 4-diphosphocytidyl-2-C-methyl-D-erythritol 2-phosphate (CDP-ME2P) to 2-C-methyl-D-erythritol 2,4-cyclodiphosphate (ME-CPP) with a corresponding release of cytidine 5-monophosphate (CMP). The protein is 2-C-methyl-D-erythritol 2,4-cyclodiphosphate synthase of Anaplasma phagocytophilum (strain HZ).